Consider the following 344-residue polypeptide: Protein RecA (344 aa).

Position 65–72 (65–72 (GPESSGKT)) interacts with ATP.

This sequence belongs to the RecA family.

The protein resides in the cytoplasm. Its function is as follows. Can catalyze the hydrolysis of ATP in the presence of single-stranded DNA, the ATP-dependent uptake of single-stranded DNA by duplex DNA, and the ATP-dependent hybridization of homologous single-stranded DNAs. It interacts with LexA causing its activation and leading to its autocatalytic cleavage. The protein is Protein RecA of Rubrobacter xylanophilus (strain DSM 9941 / JCM 11954 / NBRC 16129 / PRD-1).